The sequence spans 343 residues: Tetraacyldisaccharide 4'-kinase (343 aa).

Position 47 to 54 (47 to 54 (SVGGTGKT)) interacts with ATP.

This sequence belongs to the LpxK family.

It carries out the reaction a lipid A disaccharide + ATP = a lipid IVA + ADP + H(+). It functions in the pathway glycolipid biosynthesis; lipid IV(A) biosynthesis; lipid IV(A) from (3R)-3-hydroxytetradecanoyl-[acyl-carrier-protein] and UDP-N-acetyl-alpha-D-glucosamine: step 6/6. Its function is as follows. Transfers the gamma-phosphate of ATP to the 4'-position of a tetraacyldisaccharide 1-phosphate intermediate (termed DS-1-P) to form tetraacyldisaccharide 1,4'-bis-phosphate (lipid IVA). The protein is Tetraacyldisaccharide 4'-kinase of Flavobacterium psychrophilum (strain ATCC 49511 / DSM 21280 / CIP 103535 / JIP02/86).